A 312-amino-acid chain; its full sequence is Dehydrin CAS31 (312 aa).

Disordered regions lie at residues 1 to 88 (MSQY…HTGG) and 248 to 287 (GTEQ…HHGE). Residues 21 to 30 (PLTSQGQVDQ) show a composition bias toward polar residues. Positions 35 to 46 (ISGGGMTGATGH) are enriched in gly residues. The segment covering 55-66 (HGVGVDQTTGFG) has biased composition (low complexity). Gly residues-rich tracts occupy residues 67 to 88 (SNTG…HTGG) and 256 to 278 (TGTG…GTTG).

It belongs to the plant dehydrin family. As to quaternary structure, interacts with the leghemoglobin LB120-1 in the cytoplasm; this interaction leads to LB120-1 protection from denaturation under thermal and drought stresses. Expressed in nodules and roots.

It is found in the cytoplasm. In terms of biological role, intrinsically disordered protein acting as a chaperone. Ensures leghemoglobins (e.g. LB120-1) protection from denaturation under thermal and drought stresses to delay root nodule nitrogenase inactivation and subsequent nodule senescence, thus supporting symbiotic nitrogen fixation (SNF). The chain is Dehydrin CAS31 from Medicago truncatula (Barrel medic).